The primary structure comprises 362 residues: Outer envelope protein 39, chloroplastic (362 aa).

The protein belongs to the OEP80 (TC 1.B.33.2) family. In terms of tissue distribution, expressed in germinating seeds. Expressed in the vasculature of roots, cotyledons and leaves.

The protein localises to the plastid. Its subcellular location is the chloroplast outer membrane. Functionally, beta-barrel pore-forming protein which possesses voltage-dependent channel activity. Required for proper plastid development. Involved in the maintenance of metabolic homeostasis of full-grown plants. The protein is Outer envelope protein 39, chloroplastic of Arabidopsis thaliana (Mouse-ear cress).